The chain runs to 1377 residues: DNA-directed RNA polymerase subunit beta'' (1377 aa).

Zn(2+) is bound by residues cysteine 224, cysteine 294, cysteine 301, and cysteine 304.

Belongs to the RNA polymerase beta' chain family. RpoC2 subfamily. In terms of assembly, in plastids the minimal PEP RNA polymerase catalytic core is composed of four subunits: alpha, beta, beta', and beta''. When a (nuclear-encoded) sigma factor is associated with the core the holoenzyme is formed, which can initiate transcription. Requires Zn(2+) as cofactor.

It localises to the plastid. The protein localises to the chloroplast. The enzyme catalyses RNA(n) + a ribonucleoside 5'-triphosphate = RNA(n+1) + diphosphate. Functionally, DNA-dependent RNA polymerase catalyzes the transcription of DNA into RNA using the four ribonucleoside triphosphates as substrates. This is DNA-directed RNA polymerase subunit beta'' from Calycanthus floridus var. glaucus (Eastern sweetshrub).